The chain runs to 624 residues: Chaperone protein HtpG (624 aa).

The tract at residues 1–336 is a; substrate-binding; that stretch reads MKGQETRGFQ…SNDLPLNVSR (336 aa). The interval 337–552 is b; sequence EILQDSSVTR…ADEMSTQMAK (216 aa). The c stretch occupies residues 553–624; it reads LFAAAGQAAP…IRRMNQLLAS (72 aa).

The protein belongs to the heat shock protein 90 family. In terms of assembly, homodimer.

It is found in the cytoplasm. In terms of biological role, molecular chaperone. Has ATPase activity. The polypeptide is Chaperone protein HtpG (Klebsiella pneumoniae subsp. pneumoniae (strain ATCC 700721 / MGH 78578)).